The chain runs to 110 residues: Insulin (110 aa).

The signal sequence occupies residues 1–24 (MALWMRLLPLLAFLILWEPSPAHA). Intrachain disulfides connect Cys-31/Cys-96, Cys-43/Cys-109, and Cys-95/Cys-100. Residues 57–87 (GVDDPQMPQLELGGSPGAGDLRALALEVARQ) constitute a propeptide, c peptide.

It belongs to the insulin family. As to quaternary structure, heterodimer of a B chain and an A chain linked by two disulfide bonds.

It localises to the secreted. Functionally, insulin decreases blood glucose concentration. It increases cell permeability to monosaccharides, amino acids and fatty acids. It accelerates glycolysis, the pentose phosphate cycle, and glycogen synthesis in liver. This chain is Insulin (INS), found in Psammomys obesus (Fat sand rat).